Reading from the N-terminus, the 533-residue chain is Probable protein kinase UbiB (533 aa).

Residues 24 to 44 (LILELPMLPWWLRLLGATLPW) traverse the membrane as a helical segment. Positions 126-494 (RFEREPLASA…WKGSRHDWLG (369 aa)) constitute a Protein kinase domain. Residues 132-140 (LASASVAQV) and Lys154 each bind ATP. Catalysis depends on Asp289, which acts as the Proton acceptor. The chain crosses the membrane as a helical span at residues 510-530 (LGQQLEAWPAWVMLAGGVFLI).

The protein belongs to the ABC1 family. UbiB subfamily.

The protein localises to the cell inner membrane. The protein operates within cofactor biosynthesis; ubiquinone biosynthesis [regulation]. Its function is as follows. Is probably a protein kinase regulator of UbiI activity which is involved in aerobic coenzyme Q (ubiquinone) biosynthesis. The chain is Probable protein kinase UbiB from Pseudomonas aeruginosa (strain UCBPP-PA14).